The following is a 91-amino-acid chain: Essential MCU regulator, mitochondrial (91 aa).

Residues 45–65 (VIPFGLLGVVLTVIPGLLIGA) form a helical membrane-spanning segment.

This sequence belongs to the SMDT1/EMRE family.

The protein resides in the mitochondrion inner membrane. Its function is as follows. Essential regulatory subunit of the mitochondrial calcium uniporter (mcu) channel, a protein that mediates calcium uptake into mitochondria. This chain is Essential MCU regulator, mitochondrial, found in Aedes aegypti (Yellowfever mosquito).